Reading from the N-terminus, the 27-residue chain is Weak neurotoxin E3 (27 aa).

As to expression, expressed by the venom gland.

It is found in the secreted. Functionally, binds to muscle nicotinic acetylcholine receptor (nAChR) and inhibit acetylcholine from binding to the receptor, thereby impairing neuromuscular transmission. In Micrurus pyrrhocryptus (Coral snake), this protein is Weak neurotoxin E3.